Here is a 671-residue protein sequence, read N- to C-terminus: DNA ligase (671 aa).

NAD(+)-binding positions include 32–36 (DAEYD), 81–82 (SL), and glutamate 113. The active-site N6-AMP-lysine intermediate is lysine 115. Residues arginine 136, glutamate 173, lysine 290, and lysine 314 each contribute to the NAD(+) site. Positions 408, 411, 426, and 432 each coordinate Zn(2+). The BRCT domain occupies 593-671 (EIDSPFAGKT…EAEMLRLLGS (79 aa)).

It belongs to the NAD-dependent DNA ligase family. LigA subfamily. It depends on Mg(2+) as a cofactor. Requires Mn(2+) as cofactor.

The catalysed reaction is NAD(+) + (deoxyribonucleotide)n-3'-hydroxyl + 5'-phospho-(deoxyribonucleotide)m = (deoxyribonucleotide)n+m + AMP + beta-nicotinamide D-nucleotide.. Functionally, DNA ligase that catalyzes the formation of phosphodiester linkages between 5'-phosphoryl and 3'-hydroxyl groups in double-stranded DNA using NAD as a coenzyme and as the energy source for the reaction. It is essential for DNA replication and repair of damaged DNA. The sequence is that of DNA ligase from Escherichia coli (strain SE11).